The chain runs to 782 residues: Protein VAC14 homolog (782 aa).

Met1 carries the N-acetylmethionine modification. HEAT repeat units follow at residues Lys5–Ala42, Leu89–Gly126, Phe171–Ile208, and Asp212–Lys249. Thr11 is subject to Phosphothreonine. Disordered regions lie at residues Glu335–Cys372 and Ser471–Ser517. An HEAT 5 repeat occupies Arg438–Gly475. Positions Asp478 to Leu488 are enriched in low complexity. Thr499 is subject to Phosphothreonine. Residues Leu506–Ser517 show a composition bias toward polar residues. Ser517 carries the phosphoserine modification. The HEAT 6 repeat unit spans residues Leu560–Glu598. A Phosphoserine modification is found at Ser743. Residues Gly773–Asp777 form a mediates interaction with the PDZ domain of NOS1 region.

Belongs to the VAC14 family. Forms pentamers. Component of the PI(3,5)P2 regulatory complex/PAS complex, at least composed of PIKFYVE, FIG4 and VAC14. VAC14 nucleates the assembly of the complex and serves as a scaffold by pentamerizing into a star-shaped structure, which can bind a single copy each of PIKFYVE and FIG4 and coordinates their activities. Interacts with NOS1. As to quaternary structure, (Microbial infection) Interacts with HTLV-1 Tax. As to expression, ubiquitously expressed.

The protein localises to the endosome membrane. Its subcellular location is the microsome membrane. Its function is as follows. Scaffold protein component of the PI(3,5)P2 regulatory complex which regulates both the synthesis and turnover of phosphatidylinositol 3,5-bisphosphate (PtdIns(3,5)P2). Pentamerizes into a star-shaped structure and nucleates the assembly of the complex. The pentamer binds a single copy each of PIKFYVE and FIG4 and coordinates both PIKfyve kinase activity and FIG4 phosphatase activity, being required to maintain normal levels of phosphatidylinositol 3-phosphate (PtdIns(3)P) and phosphatidylinositol 5-phosphate (PtdIns(5)P). Plays a role in the biogenesis of endosome carrier vesicles (ECV) / multivesicular bodies (MVB) transport intermediates from early endosomes. This chain is Protein VAC14 homolog (VAC14), found in Homo sapiens (Human).